The chain runs to 134 residues: Small ribosomal subunit protein uS9 (134 aa).

A disordered region spans residues 109-134 (KGDPRRKEPKKFGGRGARARRQKSYR). Over residues 115-134 (KEPKKFGGRGARARRQKSYR) the composition is skewed to basic residues.

The protein belongs to the universal ribosomal protein uS9 family.

This is Small ribosomal subunit protein uS9 from Methanopyrus kandleri (strain AV19 / DSM 6324 / JCM 9639 / NBRC 100938).